The primary structure comprises 732 residues: Calcineurin-interacting protein 2 (732 aa).

Disordered regions lie at residues 1 to 24 (MNRG…REPY), 115 to 169 (DYEP…ALPK), 181 to 232 (QKKD…LDDR), 310 to 351 (ILSR…TSRR), 372 to 397 (RSQS…STVS), and 426 to 708 (QTVT…PLEE). A compositionally biased stretch (polar residues) spans 8 to 17 (YNRSRSTSSR). Positions 117–129 (EPLRKEPELKEQK) are enriched in basic and acidic residues. Polar residues-rich tracts occupy residues 151 to 163 (SGIT…SSRT) and 189 to 208 (IPRQ…NNEL). Positions 312 to 323 (SRSVSTSPSSVT) are enriched in low complexity. The segment covering 324–351 (DNIPKTSTSRIPSSENPKTMEHTTTSRR) has biased composition (polar residues). A compositionally biased stretch (polar residues) spans 426–439 (QTVTNVRVPSSRGS). Composition is skewed to basic and acidic residues over residues 526–538 (QSPE…RFAD) and 546–557 (PGDHQAREEDLP). Residues 607-619 (SVTPSEKSLPRNS) are compositionally biased toward polar residues. The span at 688 to 705 (NSPNKSSSSSKARPSAAP) shows a compositional bias: low complexity.

In terms of assembly, interacts with tax-6. Expressed in intestine.

The polypeptide is Calcineurin-interacting protein 2 (Caenorhabditis elegans).